Here is a 465-residue protein sequence, read N- to C-terminus: Glutamate--tRNA ligase (465 aa).

The short motif at 8–18 (PSPTGYLHIGG) is the 'HIGH' region element. Residues 236–240 (RLSKR) carry the 'KMSKS' region motif. Lys239 provides a ligand contact to ATP.

This sequence belongs to the class-I aminoacyl-tRNA synthetase family. Glutamate--tRNA ligase type 1 subfamily. Monomer.

Its subcellular location is the cytoplasm. The enzyme catalyses tRNA(Glu) + L-glutamate + ATP = L-glutamyl-tRNA(Glu) + AMP + diphosphate. In terms of biological role, catalyzes the attachment of glutamate to tRNA(Glu) in a two-step reaction: glutamate is first activated by ATP to form Glu-AMP and then transferred to the acceptor end of tRNA(Glu). The protein is Glutamate--tRNA ligase of Nitrosospira multiformis (strain ATCC 25196 / NCIMB 11849 / C 71).